A 183-amino-acid polypeptide reads, in one-letter code: Alkyl hydroperoxide reductase AhpD (183 aa).

Residue C132 is the Proton donor of the active site. A disulfide bridge links C132 with C135. The active-site Cysteine sulfenic acid (-SOH) intermediate is the C135.

This sequence belongs to the AhpD family.

The catalysed reaction is N(6)-[(R)-dihydrolipoyl]-L-lysyl-[lipoyl-carrier protein] + a hydroperoxide = N(6)-[(R)-lipoyl]-L-lysyl-[lipoyl-carrier protein] + an alcohol + H2O. In terms of biological role, antioxidant protein with alkyl hydroperoxidase activity. Required for the reduction of the AhpC active site cysteine residues and for the regeneration of the AhpC enzyme activity. In Caulobacter vibrioides (strain ATCC 19089 / CIP 103742 / CB 15) (Caulobacter crescentus), this protein is Alkyl hydroperoxide reductase AhpD.